Here is a 358-residue protein sequence, read N- to C-terminus: Neutral protease 2 homolog PADG_00776 (358 aa).

A signal peptide spans 1 to 19 (MRRVSGILAVAAFTISAFA). Residues 20 to 185 (GVIQPVAKDA…MNQFVKIAKL (166 aa)) constitute a propeptide that is removed on maturation. Intrachain disulfides connect Cys188–Cys259 and Cys266–Cys284. Asn249 carries an N-linked (GlcNAc...) asparagine glycan. His309 is a binding site for Zn(2+). The active site involves Glu310. Zn(2+) contacts are provided by His313 and Asp324.

This sequence belongs to the peptidase M35 family. The cofactor is Zn(2+).

The protein localises to the secreted. It carries out the reaction Preferential cleavage of bonds with hydrophobic residues in P1'. Also 3-Asn-|-Gln-4 and 8-Gly-|-Ser-9 bonds in insulin B chain.. Secreted metalloproteinase that allows assimilation of proteinaceous substrates. Shows high activities on basic nuclear substrates such as histone and protamine. This chain is Neutral protease 2 homolog PADG_00776, found in Paracoccidioides brasiliensis (strain Pb18).